Consider the following 539-residue polypeptide: UDP-N-acetylmuramate--L-alanine ligase (539 aa).

ATP is bound at residue 165-171 (GTHGKTT).

This sequence belongs to the MurCDEF family.

It localises to the cytoplasm. The catalysed reaction is UDP-N-acetyl-alpha-D-muramate + L-alanine + ATP = UDP-N-acetyl-alpha-D-muramoyl-L-alanine + ADP + phosphate + H(+). It participates in cell wall biogenesis; peptidoglycan biosynthesis. In terms of biological role, cell wall formation. The chain is UDP-N-acetylmuramate--L-alanine ligase from Trichodesmium erythraeum (strain IMS101).